A 215-amino-acid polypeptide reads, in one-letter code: Elongation factor Ts (215 aa).

The interval 80–83 (TDFV) is involved in Mg(2+) ion dislocation from EF-Tu.

It belongs to the EF-Ts family.

Its subcellular location is the cytoplasm. Functionally, associates with the EF-Tu.GDP complex and induces the exchange of GDP to GTP. It remains bound to the aminoacyl-tRNA.EF-Tu.GTP complex up to the GTP hydrolysis stage on the ribosome. In Alkaliphilus metalliredigens (strain QYMF), this protein is Elongation factor Ts.